A 530-amino-acid chain; its full sequence is Ubiquitin carboxyl-terminal hydrolase 17-like protein 20 (530 aa).

The USP domain occupies 80-375 (AGLQNMGNTC…QAYVLFYIQK (296 aa)). The active-site Nucleophile is the cysteine 89. Histidine 334 (proton acceptor) is an active-site residue. 2 stretches are compositionally biased toward basic and acidic residues: residues 382–392 (SESVSRGREPR) and 398–413 (DTDR…RDHP). Disordered regions lie at residues 382–413 (SESV…RDHP) and 509–530 (RGRA…LVCQ). Positions 510–524 (GRARRSKGKNKHSKR) are enriched in basic residues.

This sequence belongs to the peptidase C19 family. USP17 subfamily.

It localises to the nucleus. It is found in the endoplasmic reticulum. The catalysed reaction is Thiol-dependent hydrolysis of ester, thioester, amide, peptide and isopeptide bonds formed by the C-terminal Gly of ubiquitin (a 76-residue protein attached to proteins as an intracellular targeting signal).. Deubiquitinating enzyme that removes conjugated ubiquitin from specific proteins to regulate different cellular processes that may include cell proliferation, progression through the cell cycle, apoptosis, cell migration, and the cellular response to viral infection. This chain is Ubiquitin carboxyl-terminal hydrolase 17-like protein 20 (USP17L20), found in Homo sapiens (Human).